The primary structure comprises 509 residues: Protein disulfide-isomerase (509 aa).

A signal peptide spans 1-19 (MLSRSLLCLALAWVARVGA). The 117-residue stretch at 20–136 (DAPEEEDNVL…IVNWLKKRTG (117 aa)) folds into the Thioredoxin 1 domain. Active-site nucleophile residues include Cys55 and Cys58. A disulfide bridge connects residues Cys55 and Cys58. Residue Lys202 is modified to N6-acetyllysine. N6-succinyllysine occurs at positions 224 and 273. Phosphoserine is present on residues Ser333 and Ser359. The 143-residue stretch at 335–477 (ELTAEKITEF…FKKFLESGGQ (143 aa)) folds into the Thioredoxin 2 domain. Residues Cys399 and Cys402 each act as nucleophile in the active site. Cys399 and Cys402 form a disulfide bridge. At Ser429 the chain carries Phosphoserine. Residues 473–509 (ESGGQDGAGDDDDVDLEEALEPDMEEDDDQKAVKDEL) are disordered. Residues 480–501 (AGDDDDVDLEEALEPDMEEDDD) show a composition bias toward acidic residues. The Prevents secretion from ER signature appears at 506 to 509 (KDEL).

It belongs to the protein disulfide isomerase family. Heterodimer; heterodimerizes with the protein microsomal triglyceride transfer MTTP. Homodimer. Homodimer. Monomers and homotetramers may also occur. Interacts with P4HA2, forming a heterotetramer consisting of 2 alpha subunits (P4HA2) and 2 beta (P4HB), where P4HB plays the role of a structural subunit; this tetramer catalyzes the formation of 4-hydroxyproline in collagen. Also constitutes the structural subunit of the microsomal triacylglycerol transfer protein MTTP in mammalian cells. Stabilizes both enzymes and retain them in the ER without contributing to the catalytic activity. Binds UBQLN1. Interacts with ERO1B. Interacts with ILDR2. Interacts with ERN1/IRE1A (via N-terminus); the interaction is enhanced by phosphorylation of P4HB by FAM20C in response to endoplasmic reticulum stress and results in attenuation of ERN1 activity. In terms of processing, phosphorylation of Ser-359 by FAM20C is induced by endoplasmic reticulum stress and results in a functional switch from oxidoreductase to molecular chaperone. It also promotes interaction with ERN1.

The protein localises to the endoplasmic reticulum. It is found in the endoplasmic reticulum lumen. It localises to the melanosome. The protein resides in the cell membrane. The catalysed reaction is Catalyzes the rearrangement of -S-S- bonds in proteins.. Functionally, this multifunctional protein catalyzes the formation, breakage and rearrangement of disulfide bonds. At the cell surface, seems to act as a reductase that cleaves disulfide bonds of proteins attached to the cell. May therefore cause structural modifications of exofacial proteins. Inside the cell, seems to form/rearrange disulfide bonds of nascent proteins. At high concentrations and following phosphorylation by FAM20C, functions as a chaperone that inhibits aggregation of misfolded proteins. At low concentrations, facilitates aggregation (anti-chaperone activity). May be involved with other chaperones in the structural modification of the TG precursor in hormone biogenesis. Also acts as a structural subunit of various enzymes such as prolyl 4-hydroxylase and microsomal triacylglycerol transfer protein MTTP. Receptor for LGALS9; the interaction retains P4HB at the cell surface of Th2 T helper cells, increasing disulfide reductase activity at the plasma membrane, altering the plasma membrane redox state and enhancing cell migration. The chain is Protein disulfide-isomerase (P4HB) from Cricetulus griseus (Chinese hamster).